Reading from the N-terminus, the 454-residue chain is Toxin CfTX-A (454 aa).

Positions 1-18 are cleaved as a signal peptide; it reads MDYAFIVFLVCFVSGTLG. Residues 19-25 constitute a propeptide that is removed on maturation; that stretch reads NRRRAKR. Residues 27-61 adopt a coiled-coil conformation; sequence VDEVTSGINQLVNQLNNVQQDTAAIKSALEELKTE.

Belongs to the jellyfish toxin family. Type II subfamily. Oligomer. Contains 2 disulfide bonds. Nematocytes.

The protein resides in the secreted. It localises to the nematocyst. Its subcellular location is the target cell membrane. Its function is as follows. The fraction containing this toxin and CfTX-A shows potent hemolytic activity. This fraction causes minor effects on the cardiovascular system of anesthetized rats (at 25 ug/kg), since it has no significant effects on heart rate but produces relatively small increases in mean arterial pressure. The polypeptide is Toxin CfTX-A (Chironex fleckeri (Australian box jellyfish)).